The chain runs to 255 residues: Large ribosomal subunit protein uL4 (255 aa).

It belongs to the universal ribosomal protein uL4 family. In terms of assembly, part of the 50S ribosomal subunit.

In terms of biological role, one of the primary rRNA binding proteins, this protein initially binds near the 5'-end of the 23S rRNA. It is important during the early stages of 50S assembly. It makes multiple contacts with different domains of the 23S rRNA in the assembled 50S subunit and ribosome. Functionally, forms part of the polypeptide exit tunnel. The polypeptide is Large ribosomal subunit protein uL4 (Pyrococcus abyssi (strain GE5 / Orsay)).